Consider the following 111-residue polypeptide: Large ribosomal subunit protein uL22 (111 aa).

Belongs to the universal ribosomal protein uL22 family. Part of the 50S ribosomal subunit.

In terms of biological role, this protein binds specifically to 23S rRNA; its binding is stimulated by other ribosomal proteins, e.g. L4, L17, and L20. It is important during the early stages of 50S assembly. It makes multiple contacts with different domains of the 23S rRNA in the assembled 50S subunit and ribosome. Functionally, the globular domain of the protein is located near the polypeptide exit tunnel on the outside of the subunit, while an extended beta-hairpin is found that lines the wall of the exit tunnel in the center of the 70S ribosome. This Citrifermentans bemidjiense (strain ATCC BAA-1014 / DSM 16622 / JCM 12645 / Bem) (Geobacter bemidjiensis) protein is Large ribosomal subunit protein uL22.